A 449-amino-acid chain; its full sequence is tRNA (guanine(37)-N(1))-methyltransferase (449 aa).

Residues histidine 216, 254-255 (DL), 282-283 (DG), and asparagine 345 each bind S-adenosyl-L-methionine.

It belongs to the class I-like SAM-binding methyltransferase superfamily. TRM5/TYW2 family. As to quaternary structure, monomer.

Its subcellular location is the mitochondrion matrix. It is found in the nucleus. The protein resides in the cytoplasm. The catalysed reaction is guanosine(37) in tRNA + S-adenosyl-L-methionine = N(1)-methylguanosine(37) in tRNA + S-adenosyl-L-homocysteine + H(+). Specifically methylates the N1 position of guanosine-37 in various cytoplasmic and mitochondrial tRNAs. Methylation is not dependent on the nature of the nucleoside 5' of the target nucleoside. This is the first step in the biosynthesis of wybutosine (yW), a modified base adjacent to the anticodon of tRNAs and required for accurate decoding. The chain is tRNA (guanine(37)-N(1))-methyltransferase from Candida albicans (strain WO-1) (Yeast).